Here is a 299-residue protein sequence, read N- to C-terminus: Riboflavin transporter ImpX (299 aa).

EamA domains are found at residues 6 to 144 (KGAL…YLLT) and 162 to 294 (SLYS…SIIK). 10 helical membrane-spanning segments follow: residues 7 to 27 (GALL…ALTP), 34 to 54 (VPFV…ILFG), 68 to 88 (DLFF…LCIV), 101 to 121 (VVTL…RLLL), 129 to 149 (YLFW…EFHL), 158 to 178 (LLPA…ATVF), 202 to 222 (IMFV…ATAG), 224 to 244 (WLIF…LYYF), 253 to 273 (VATM…YLIN), and 276 to 296 (VLSP…IKIS).

Belongs to the EamA transporter family.

Its subcellular location is the cell membrane. Its function is as follows. Transports riboflavin into the cell. This Fusobacterium nucleatum subsp. nucleatum (strain ATCC 23726 / VPI 4351) protein is Riboflavin transporter ImpX.